We begin with the raw amino-acid sequence, 202 residues long: Small ribosomal subunit protein uS4 (202 aa).

Residues 17-42 (ELPGLSRKTPRRAYPPGQHGQARKKR) form a disordered region. Residues 90–152 (MRLDNTIFRL…DASRKLIETH (63 aa)) enclose the S4 RNA-binding domain.

The protein belongs to the universal ribosomal protein uS4 family. As to quaternary structure, part of the 30S ribosomal subunit. Contacts protein S5. The interaction surface between S4 and S5 is involved in control of translational fidelity.

Its function is as follows. One of the primary rRNA binding proteins, it binds directly to 16S rRNA where it nucleates assembly of the body of the 30S subunit. With S5 and S12 plays an important role in translational accuracy. The polypeptide is Small ribosomal subunit protein uS4 (Acaryochloris marina (strain MBIC 11017)).